A 245-amino-acid polypeptide reads, in one-letter code: DNA repair protein RecO (245 aa).

This sequence belongs to the RecO family.

Functionally, involved in DNA repair and RecF pathway recombination. The chain is DNA repair protein RecO from Pectobacterium atrosepticum (strain SCRI 1043 / ATCC BAA-672) (Erwinia carotovora subsp. atroseptica).